The following is a 186-amino-acid chain: Low amplitude and bright protein LabA (186 aa).

Functions in an output pathway of the circadian clock. One of three clock output pathways. Involved in negative feedback regulation of KaiC; deletion leads to overexpression of KaiC protein and decreases the amplitude of the circadian response. Overexpression reduces the expression of circadian genes. In Synechococcus elongatus (strain ATCC 33912 / PCC 7942 / FACHB-805) (Anacystis nidulans R2), this protein is Low amplitude and bright protein LabA.